A 549-amino-acid polypeptide reads, in one-letter code: Glucose-6-phosphate isomerase (549 aa).

The Proton donor role is filled by glutamate 355. Catalysis depends on residues histidine 386 and lysine 514.

This sequence belongs to the GPI family.

The protein resides in the cytoplasm. The enzyme catalyses alpha-D-glucose 6-phosphate = beta-D-fructose 6-phosphate. It functions in the pathway carbohydrate biosynthesis; gluconeogenesis. The protein operates within carbohydrate degradation; glycolysis; D-glyceraldehyde 3-phosphate and glycerone phosphate from D-glucose: step 2/4. In terms of biological role, catalyzes the reversible isomerization of glucose-6-phosphate to fructose-6-phosphate. The chain is Glucose-6-phosphate isomerase from Salmonella enteritidis PT4 (strain P125109).